A 273-amino-acid chain; its full sequence is Ribosomal RNA small subunit methyltransferase A (273 aa).

S-adenosyl-L-methionine-binding residues include Asn-19, Leu-21, Gly-46, Glu-67, Asp-92, and Asn-113.

The protein belongs to the class I-like SAM-binding methyltransferase superfamily. rRNA adenine N(6)-methyltransferase family. RsmA subfamily.

It localises to the cytoplasm. It catalyses the reaction adenosine(1518)/adenosine(1519) in 16S rRNA + 4 S-adenosyl-L-methionine = N(6)-dimethyladenosine(1518)/N(6)-dimethyladenosine(1519) in 16S rRNA + 4 S-adenosyl-L-homocysteine + 4 H(+). Its function is as follows. Specifically dimethylates two adjacent adenosines (A1518 and A1519) in the loop of a conserved hairpin near the 3'-end of 16S rRNA in the 30S particle. May play a critical role in biogenesis of 30S subunits. In Hahella chejuensis (strain KCTC 2396), this protein is Ribosomal RNA small subunit methyltransferase A.